The following is a 230-amino-acid chain: 2,3-bisphosphoglycerate-dependent phosphoglycerate mutase (230 aa).

Substrate-binding positions include 10 to 17, 23 to 24, R62, 89 to 92, K100, 116 to 117, and 185 to 186; these read RHGQSKWN, TG, ERHY, RR, and GN. H11 functions as the Tele-phosphohistidine intermediate in the catalytic mechanism. The active-site Proton donor/acceptor is the E89.

Belongs to the phosphoglycerate mutase family. BPG-dependent PGAM subfamily. In terms of assembly, homodimer.

The catalysed reaction is (2R)-2-phosphoglycerate = (2R)-3-phosphoglycerate. The protein operates within carbohydrate degradation; glycolysis; pyruvate from D-glyceraldehyde 3-phosphate: step 3/5. Catalyzes the interconversion of 2-phosphoglycerate and 3-phosphoglycerate. This Buchnera aphidicola subsp. Schizaphis graminum (strain Sg) protein is 2,3-bisphosphoglycerate-dependent phosphoglycerate mutase.